Consider the following 266-residue polypeptide: Orotidine 5'-phosphate decarboxylase (266 aa).

Substrate-binding positions include aspartate 37, 59–61 (KTH), 91–100 (DRKFADIGNT), tyrosine 217, and arginine 235. The active-site Proton donor is lysine 93.

The protein belongs to the OMP decarboxylase family.

The catalysed reaction is orotidine 5'-phosphate + H(+) = UMP + CO2. The protein operates within pyrimidine metabolism; UMP biosynthesis via de novo pathway; UMP from orotate: step 2/2. The protein is Orotidine 5'-phosphate decarboxylase (URA3) of Cyberlindnera jadinii (Torula yeast).